Reading from the N-terminus, the 352-residue chain is Beta-hexosaminidase (352 aa).

Residues Asp-74, Arg-82, Arg-149, and 179–180 each bind substrate; that span reads KH. The Proton donor/acceptor role is filled by His-192. Asp-263 serves as the catalytic Nucleophile.

It belongs to the glycosyl hydrolase 3 family. NagZ subfamily.

It is found in the cytoplasm. It carries out the reaction Hydrolysis of terminal non-reducing N-acetyl-D-hexosamine residues in N-acetyl-beta-D-hexosaminides.. Its pathway is cell wall biogenesis; peptidoglycan recycling. Functionally, plays a role in peptidoglycan recycling by cleaving the terminal beta-1,4-linked N-acetylglucosamine (GlcNAc) from peptide-linked peptidoglycan fragments, giving rise to free GlcNAc, anhydro-N-acetylmuramic acid and anhydro-N-acetylmuramic acid-linked peptides. This chain is Beta-hexosaminidase, found in Bordetella pertussis (strain Tohama I / ATCC BAA-589 / NCTC 13251).